We begin with the raw amino-acid sequence, 132 residues long: Ribonuclease P protein component (132 aa).

The protein belongs to the RnpA family. As to quaternary structure, consists of a catalytic RNA component (M1 or rnpB) and a protein subunit.

The catalysed reaction is Endonucleolytic cleavage of RNA, removing 5'-extranucleotides from tRNA precursor.. Functionally, RNaseP catalyzes the removal of the 5'-leader sequence from pre-tRNA to produce the mature 5'-terminus. It can also cleave other RNA substrates such as 4.5S RNA. The protein component plays an auxiliary but essential role in vivo by binding to the 5'-leader sequence and broadening the substrate specificity of the ribozyme. This is Ribonuclease P protein component from Marinobacter nauticus (strain ATCC 700491 / DSM 11845 / VT8) (Marinobacter aquaeolei).